We begin with the raw amino-acid sequence, 268 residues long: MRLIPLKTAQQVSKWAAKYIVDRINTFAPTAERPFVLGLPTGGTPLQTYKELIKLYQAEEVSFKYVVTFNMDEYVGLPKEHPESYHSFMYNNFFNHIDIQPQNINILDGNTDDHDEECRRYEEKIKSYGKINLFMGGVGVDGHIAFNEPASSLASRTRIKTLTEDTLIANSRFFDNDVTKVPKYALTIGVATLLDAEEVMLLVTGHNKALALQAGVEGNVNHFWTISALQLHRHAIFVCDEPATQELKVKTVKYFTELEQRAIHSVLD.

Catalysis depends on Asp72, which acts as the Proton acceptor; for enolization step. The active-site For ring-opening step is the Asp141. Catalysis depends on His143, which acts as the Proton acceptor; for ring-opening step. Glu148 (for ring-opening step) is an active-site residue.

The protein belongs to the glucosamine/galactosamine-6-phosphate isomerase family. NagB subfamily. Homohexamer.

It catalyses the reaction alpha-D-glucosamine 6-phosphate + H2O = beta-D-fructose 6-phosphate + NH4(+). It participates in amino-sugar metabolism; N-acetylneuraminate degradation; D-fructose 6-phosphate from N-acetylneuraminate: step 5/5. Its activity is regulated as follows. Allosterically activated by N-acetylglucosamine 6-phosphate (GlcNAc6P). Catalyzes the reversible isomerization-deamination of glucosamine 6-phosphate (GlcN6P) to form fructose 6-phosphate (Fru6P) and ammonium ion. The sequence is that of Glucosamine-6-phosphate deaminase from Histophilus somni (strain 2336) (Haemophilus somnus).